The chain runs to 470 residues: TNF receptor-associated factor 4 (470 aa).

An RING-type zinc finger spans residues 18-58 (CPLCGKPMREPVQVSTCGHRFCDTCLQEFLSEGVFKCPEDQ). 3 consecutive TRAF-type zinc fingers follow at residues 102–154 (HLNT…EAYE), 155–208 (SHEG…DTIQ), and 209–266 (SHQY…KLAM). Residue lysine 263 forms a Glycyl lysine isopeptide (Lys-Gly) (interchain with G-Cter in ubiquitin) linkage. Residues 277–309 (HLAMMCALVSRQRQELQELRRELEELSVGSDGV) adopt a coiled-coil conformation. The region spanning 307-462 (DGVLIWKIGS…DDAVFIRAAV (156 aa)) is the MATH domain. Serine 426 is subject to Phosphoserine.

The protein belongs to the TNF receptor-associated factor family. B subfamily. As to quaternary structure, homotrimer. Interacts with LTBR/TNFRSF3, NGFR/TNFRSF16, RPS6KB1 and TGFB1I1. Interacts with SMURF1. Interacts (via TRAF domain) with MAP3K4 (via kinase domain). Interacts with NCF1, TICAM1, IRAK1 and TRAF6, and is probably part of a complex containing TRAF4, NCF1, TICAM1, IRAK1 and TRAF6. Interacts (via MATH domain) with GP6 and GP1BB. Interacts with EGFR (via C-terminal region); this interaction promotes the formation of EGFR asymmetric dimers. Interacts with PKM; this interaction promotes PKM kinase activity. Polyubiquitinated, leading to its proteasomal degradation. Ubiquitinated at Lys-263 by the SCF(FBXL2) complex, leading to its degradation by the proteasome. As to expression, expressed in epithelial cells of thymus, dendritic cells of lymph node, and in the basal cell layer of epithelia such as epidermis, nasopharynx, respiratory tract, salivary gland, and esophagus.

The protein resides in the cytoplasm. It localises to the nucleus. Its subcellular location is the perinuclear region. The protein localises to the cell junction. It is found in the tight junction. The protein resides in the cell membrane. It localises to the cytoskeleton. The enzyme catalyses S-ubiquitinyl-[E2 ubiquitin-conjugating enzyme]-L-cysteine + [acceptor protein]-L-lysine = [E2 ubiquitin-conjugating enzyme]-L-cysteine + N(6)-ubiquitinyl-[acceptor protein]-L-lysine.. It functions in the pathway protein degradation; proteasomal ubiquitin-dependent pathway. Adapter protein with E3 ligase activity that is involved in many diverse biological processes including cell proliferation, migration, differentiation, DNA repair, platelet activation or apoptosis. Promotes EGFR-mediated signaling by facilitating the dimerization of EGFR and downstream AKT activation thereby promoting cell proliferation. Ubiquitinates SMURF2 through 'Lys-48'-linked ubiquitin chain leading to SMURF2 degradation through the proteasome and subsequently osteogenic differentiation. Promotes 'Lys-63'-mediated ubiquitination of CHK1 which in turn activates cell cycle arrest and activation of DNA repair. In addition, promotes an atypical 'Lys-29'-linked ubiquitination at the C-terminal end of IRS1 which is crucial for insulin-like growth factor (IGF) signal transduction. Regulates activation of NF-kappa-B in response to signaling through Toll-like receptors. Required for normal skeleton development, and for normal development of the respiratory tract. Required for activation of RPS6KB1 in response to TNF signaling. Modulates TRAF6 functions. Inhibits adipogenic differentiation by activating pyruvate kinase PKM activity and subsequently the beta-catenin signaling pathway. The chain is TNF receptor-associated factor 4 (TRAF4) from Homo sapiens (Human).